An 81-amino-acid polypeptide reads, in one-letter code: Large ribosomal subunit protein bL27m (81 aa).

Residues 1–11 (MATKKSGGSSR) show a composition bias toward polar residues. The segment at 1–20 (MATKKSGGSSRNGRDSKGRR) is disordered.

Belongs to the bacterial ribosomal protein bL27 family.

It localises to the mitochondrion. In Reclinomonas americana, this protein is Large ribosomal subunit protein bL27m (RPL27).